Here is a 230-residue protein sequence, read N- to C-terminus: MADS-box transcription factor 50 (230 aa).

An MADS-box domain is found at 1 to 61; sequence MVRGKTQMKR…GKLYEFASAS (61 aa). The K-box domain maps to 86-176; that stretch reads IEQVKADADG…REKCKNQPPL (91 aa). The interval 209–230 is disordered; sequence GLPGRSRSSGGAAEDSQAMPHS.

Expressed in mature leaves and at low levels in roots and young panicles.

The protein localises to the nucleus. Functionally, probable transcription factor active in flowering time control. May control internode elongation and promote floral transition phase. May act upstream of the floral regulators MADS1, MADS14, MADS15 and MADS18 in the floral induction pathway. The sequence is that of MADS-box transcription factor 50 (MADS50) from Oryza sativa subsp. japonica (Rice).